A 145-amino-acid polypeptide reads, in one-letter code: Beta sliding clamp (145 aa).

This sequence belongs to the beta sliding clamp family. Forms a ring-shaped head-to-tail homodimer around DNA which binds and tethers DNA polymerases and other proteins to the DNA. The DNA replisome complex has a single clamp-loading complex (3 tau and 1 each of delta, delta', psi and chi subunits) which binds 3 Pol III cores (1 core on the leading strand and 2 on the lagging strand) each with a beta sliding clamp dimer. Additional proteins in the replisome are other copies of gamma, psi and chi, Ssb, DNA helicase and RNA primase.

The protein localises to the cytoplasm. Its function is as follows. Confers DNA tethering and processivity to DNA polymerases and other proteins. Acts as a clamp, forming a ring around DNA (a reaction catalyzed by the clamp-loading complex) which diffuses in an ATP-independent manner freely and bidirectionally along dsDNA. Initially characterized for its ability to contact the catalytic subunit of DNA polymerase III (Pol III), a complex, multichain enzyme responsible for most of the replicative synthesis in bacteria; Pol III exhibits 3'-5' exonuclease proofreading activity. The beta chain is required for initiation of replication as well as for processivity of DNA replication. This Vibrio harveyi (Beneckea harveyi) protein is Beta sliding clamp (dnaN).